Here is a 77-residue protein sequence, read N- to C-terminus: Translation initiation factor IF-1, chloroplastic (77 aa).

Residues 1-72 (MKKQNLIEME…TKGRITYRLR (72 aa)) enclose the S1-like domain.

The protein belongs to the IF-1 family. Component of the 30S ribosomal translation pre-initiation complex which assembles on the 30S ribosome in the order IF-2 and IF-3, IF-1 and N-formylmethionyl-tRNA(fMet); mRNA recruitment can occur at any time during PIC assembly.

The protein resides in the plastid. The protein localises to the chloroplast. Functionally, one of the essential components for the initiation of protein synthesis. Stabilizes the binding of IF-2 and IF-3 on the 30S subunit to which N-formylmethionyl-tRNA(fMet) subsequently binds. Helps modulate mRNA selection, yielding the 30S pre-initiation complex (PIC). Upon addition of the 50S ribosomal subunit IF-1, IF-2 and IF-3 are released leaving the mature 70S translation initiation complex. This is Translation initiation factor IF-1, chloroplastic from Zygnema circumcarinatum (Green alga).